The following is a 131-amino-acid chain: Peptide methionine sulfoxide reductase MsrB (131 aa).

In terms of domain architecture, MsrB spans 8–130; it reads LDEWRSMLDP…NSVCIDLRPR (123 aa). 4 residues coordinate Zn(2+): C47, C50, C96, and C99. C119 acts as the Nucleophile in catalysis.

It belongs to the MsrB Met sulfoxide reductase family. Zn(2+) serves as cofactor.

It catalyses the reaction L-methionyl-[protein] + [thioredoxin]-disulfide + H2O = L-methionyl-(R)-S-oxide-[protein] + [thioredoxin]-dithiol. The sequence is that of Peptide methionine sulfoxide reductase MsrB from Pseudomonas putida (strain ATCC 700007 / DSM 6899 / JCM 31910 / BCRC 17059 / LMG 24140 / F1).